The following is an 887-amino-acid chain: Pyruvate, phosphate dikinase 2 (887 aa).

Phosphothreonine; by PDRP1 is present on Thr467. His469 serves as the catalytic Tele-phosphohistidine intermediate. Arg575, Arg632, Glu761, Gly782, Thr783, Asn784, and Asp785 together coordinate substrate. Glu761 contacts Mg(2+). Mg(2+) is bound at residue Asp785. The active-site Proton donor is the Cys847.

Belongs to the PEP-utilizing enzyme family. It depends on Mg(2+) as a cofactor.

It localises to the cytoplasm. It carries out the reaction pyruvate + phosphate + ATP = phosphoenolpyruvate + AMP + diphosphate + H(+). Its function is as follows. Formation of phosphoenolpyruvate. The chain is Pyruvate, phosphate dikinase 2 (PPDK2) from Oryza sativa subsp. japonica (Rice).